The sequence spans 746 residues: Protein C-mannosyl-transferase DPY19L1 (746 aa).

Positions 1–68 (MVLQARSKHR…RAETAAPAPD (68 aa)) are disordered. Residues 14–27 (PRPPRPARSSPPPL) are compositionally biased toward pro residues. 12 consecutive transmembrane segments (helical) span residues 93-113 (STLLLASFAALLHWSHITQLF), 139-159 (YSYFKTIVEAPSFLSGVWMIM), 227-247 (ACFYVAVIFMLNGLMMALFFI), 248-268 (YGTYLSGSRLGGLVTVLCFFF), 308-328 (YRGSLIALCISNVFFMLPWQF), 329-349 (AQFVLLTQIASLFAVYVVGYI), 357-377 (IIYTHMISLVLCFVLMFGNSM), 378-398 (LLTSYYASSLVIIWGMLAMKP), 405-425 (VSELSLWVIQGCCWLFGTVTL), 481-501 (LLLPVVLAIVAAIGRKIINDM), 520-540 (GELVYHALQLFAYTALGILIM), and 562-582 (LFGWLFGKVHPGAVVFAVLAA).

The protein belongs to the dpy-19 family.

It is found in the endoplasmic reticulum membrane. The enzyme catalyses L-tryptophyl-[protein] + a di-trans,poly-cis-dolichyl beta-D-mannosyl phosphate = C-alpha-D-mannosyl-L-tryptophyl-[protein] + a di-trans,poly-cis-dolichyl phosphate + H(+). The protein operates within protein modification; protein glycosylation. Its function is as follows. C-mannosyltransferase that mediates the C-mannosylation tryptophan residues on target proteins. The reaction occurs on the luminal side of the endoplasmic reticulum and involves the transfer of a mannose unit from a dolichylphosphate mannose (Dol-P-Man) donor to an acceptor protein containing a WxxW consensus sequence. C-mannosylates the first two tryptophans in the WxxWxxWxxC sequence motif in thrombospondin (TSP) type-1 repeats of UNC5A. Regulates neurite extension during development. The chain is Protein C-mannosyl-transferase DPY19L1 (Dpy19l1) from Rattus norvegicus (Rat).